A 252-amino-acid chain; its full sequence is Ubiquinone/menaquinone biosynthesis C-methyltransferase UbiE (252 aa).

S-adenosyl-L-methionine is bound by residues Thr-71, Asp-100, Asp-124 to Ala-125, and Ser-141.

The protein belongs to the class I-like SAM-binding methyltransferase superfamily. MenG/UbiE family.

The enzyme catalyses a 2-demethylmenaquinol + S-adenosyl-L-methionine = a menaquinol + S-adenosyl-L-homocysteine + H(+). The catalysed reaction is a 2-methoxy-6-(all-trans-polyprenyl)benzene-1,4-diol + S-adenosyl-L-methionine = a 5-methoxy-2-methyl-3-(all-trans-polyprenyl)benzene-1,4-diol + S-adenosyl-L-homocysteine + H(+). It functions in the pathway quinol/quinone metabolism; menaquinone biosynthesis; menaquinol from 1,4-dihydroxy-2-naphthoate: step 2/2. Its pathway is cofactor biosynthesis; ubiquinone biosynthesis. Its function is as follows. Methyltransferase required for the conversion of demethylmenaquinol (DMKH2) to menaquinol (MKH2) and the conversion of 2-polyprenyl-6-methoxy-1,4-benzoquinol (DDMQH2) to 2-polyprenyl-3-methyl-6-methoxy-1,4-benzoquinol (DMQH2). The chain is Ubiquinone/menaquinone biosynthesis C-methyltransferase UbiE from Caulobacter vibrioides (strain ATCC 19089 / CIP 103742 / CB 15) (Caulobacter crescentus).